We begin with the raw amino-acid sequence, 343 residues long: tRNA N6-adenosine threonylcarbamoyltransferase (343 aa).

Residues His-112 and His-116 each contribute to the Fe cation site. Substrate is bound by residues 135–139 (LVSGG), Asp-168, Gly-181, and Asn-273. Asp-301 contributes to the Fe cation binding site.

It belongs to the KAE1 / TsaD family. Fe(2+) serves as cofactor.

It localises to the cytoplasm. The catalysed reaction is L-threonylcarbamoyladenylate + adenosine(37) in tRNA = N(6)-L-threonylcarbamoyladenosine(37) in tRNA + AMP + H(+). Functionally, required for the formation of a threonylcarbamoyl group on adenosine at position 37 (t(6)A37) in tRNAs that read codons beginning with adenine. Is involved in the transfer of the threonylcarbamoyl moiety of threonylcarbamoyl-AMP (TC-AMP) to the N6 group of A37, together with TsaE and TsaB. TsaD likely plays a direct catalytic role in this reaction. This is tRNA N6-adenosine threonylcarbamoyltransferase from Azoarcus sp. (strain BH72).